A 152-amino-acid chain; its full sequence is Ribosome maturation factor RimP (152 aa).

The protein belongs to the RimP family.

The protein localises to the cytoplasm. In terms of biological role, required for maturation of 30S ribosomal subunits. In Photorhabdus laumondii subsp. laumondii (strain DSM 15139 / CIP 105565 / TT01) (Photorhabdus luminescens subsp. laumondii), this protein is Ribosome maturation factor RimP.